A 205-amino-acid chain; its full sequence is MESRKIKVMATAIALIMVAMVVDAAGADKGKDKEECTAQLVGMATCLPYVQGKAKSPTPDCCSGLKQVINSDMKCLCMIIQERNDPDLGLQVNVSLALALPSVCHATADITKCPALLHLDPNSPDAQVFYQLAKGLNETVSASAPTGSASEPTSMSSTPGSSAGNNSGRTTSVPGTNHAQSFSKQWLGLEVVAHFFVIFYIFILV.

A signal peptide spans 1–24 (MESRKIKVMATAIALIMVAMVVDA). Disulfide bonds link C36–C77, C46–C61, C62–C104, and C75–C113. Residues N93, N137, and N165 are each glycosylated (N-linked (GlcNAc...) asparagine). The disordered stretch occupies residues 141–176 (SASAPTGSASEPTSMSSTPGSSAGNNSGRTTSVPGT). N177 is lipidated: GPI-anchor amidated asparagine. Positions 178-205 (HAQSFSKQWLGLEVVAHFFVIFYIFILV) are cleaved as a propeptide — removed in mature form.

It belongs to the plant LTP family. In terms of tissue distribution, expressed preferentially in expanding leaves and sepals, restricted to the distal side. Expressed at low levels in roots and stems.

The protein localises to the cell membrane. Its function is as follows. Probable lipid transfer protein. In Arabidopsis thaliana (Mouse-ear cress), this protein is Non-specific lipid transfer protein GPI-anchored 13.